Reading from the N-terminus, the 256-residue chain is Major prion protein (256 aa).

A signal peptide spans M1–C24. An interaction with GRB2, ERI3 and SYN1 region spans residues K25–A233. Positions P28 to T110 are disordered. 5 repeat units span residues P54–Q62, P63–Q70, P71–Q78, P79–Q86, and P87–Q95. The 5 X 8 AA tandem repeats of P-H-G-G-G-W-G-Q stretch occupies residues P54–Q95. Residues Q55 to G97 show a composition bias toward gly residues. Cu(2+) contacts are provided by H64, G65, G66, H72, G73, G74, H80, G81, G82, H88, G90, and G91. Residues C182 and C217 are joined by a disulfide bond. 2 N-linked (GlcNAc...) (complex) asparagine glycosylation sites follow: N184 and N200. A233 carries the GPI-anchor amidated alanine lipid modification. A propeptide spans S234–G256 (removed in mature form).

This sequence belongs to the prion family. In terms of assembly, monomer and homodimer. Has a tendency to aggregate into amyloid fibrils containing a cross-beta spine, formed by a steric zipper of superposed beta-strands. Soluble oligomers may represent an intermediate stage on the path to fibril formation. Copper binding may promote oligomerization. Interacts with GRB2, APP, ERI3/PRNPIP and SYN1. Mislocalized cytosolically exposed PrP interacts with MGRN1; this interaction alters MGRN1 subcellular location and causes lysosomal enlargement. Interacts with KIAA1191.

The protein resides in the cell membrane. It localises to the golgi apparatus. Its primary physiological function is unclear. Has cytoprotective activity against internal or environmental stresses. May play a role in neuronal development and synaptic plasticity. May be required for neuronal myelin sheath maintenance. May play a role in iron uptake and iron homeostasis. Soluble oligomers are toxic to cultured neuroblastoma cells and induce apoptosis (in vitro). Association with GPC1 (via its heparan sulfate chains) targets PRNP to lipid rafts. Also provides Cu(2+) or Zn(2+) for the ascorbate-mediated GPC1 deaminase degradation of its heparan sulfate side chains. The chain is Major prion protein (PRNP) from Ovis aries (Sheep).